The following is a 202-amino-acid chain: Dephospho-CoA kinase (202 aa).

The region spanning 6–202 is the DPCK domain; the sequence is KVSITGDLSS…EYFYALKGAL (197 aa). Residue 14–19 coordinates ATP; that stretch reads SSGKTE.

Belongs to the CoaE family.

Its subcellular location is the cytoplasm. It carries out the reaction 3'-dephospho-CoA + ATP = ADP + CoA + H(+). The protein operates within cofactor biosynthesis; coenzyme A biosynthesis; CoA from (R)-pantothenate: step 5/5. Functionally, catalyzes the phosphorylation of the 3'-hydroxyl group of dephosphocoenzyme A to form coenzyme A. This is Dephospho-CoA kinase from Chlamydia felis (strain Fe/C-56) (Chlamydophila felis).